A 103-amino-acid chain; its full sequence is UPF0058 protein MJ1205 (103 aa).

This sequence belongs to the UPF0058 family.

In Methanocaldococcus jannaschii (strain ATCC 43067 / DSM 2661 / JAL-1 / JCM 10045 / NBRC 100440) (Methanococcus jannaschii), this protein is UPF0058 protein MJ1205.